Consider the following 137-residue polypeptide: MRPQQAPVSGKVFIQRDYSGGTRCQFQSKFPAELENRIDRQQFEETVRTLNNLYAEAEKLGGQSYLEGCLACLTAYTIFLCMETHYEKVLKKIAKFIQEQNEKIYAPQGLLLTDPIERGLRVIEITIYEDRGMSSGR.

2 S-palmitoyl cysteine lipidation sites follow: cysteine 69 and cysteine 72.

The protein belongs to the ERF4 family. In terms of assembly, interacts with ZDHHC9.

Its subcellular location is the golgi apparatus membrane. Its function is as follows. May be involved in protein transport from Golgi to cell surface. The ZDHHC9-GOLGA7 complex is a palmitoyltransferase specific for HRAS and NRAS. The sequence is that of Golgin subfamily A member 7 (GOLGA7) from Gallus gallus (Chicken).